The chain runs to 667 residues: MSKQQAPNTTGIGTADLQWHSDETPYSPRFDDIYYAPTHGAEESTHVFLEGINAPACWQQRPHYTLAETGFGTGLNFLLTLDLWLATAPAHGRLHYIAVEAYPMDQAALARAHAPFAWLAPHSAALVQAWPPAVAGFHQRSLAQGRVTLTLLFGPAASMLAQLSATVDGWYLDGFAPSRNPEMWSDTLFAQLSRLSRLGTRLASFTVAGTVKRGLRAQGFTLHKAPGFGQKRECLRGVLENPLPHKPNIPPWYAPPQRSEPVSSVAIIGAGIAGAACAYACRRAGLQVTLFERHAQPGAEASGNPSGLFSPRLTAGVSLDGRFHAAAYFHALDLYAQLAQHTPEIYHPGRGLLQMAESEADVQRLQQALFHSAWPPQHAQWWDAATASQQLGTPLPRGGLWHAQAGALNPSVLCAALLADVTAHYQTEIVRLAPQPEGWTLHTAQRHYGTFDAVVIAAGATAPLLYPEAEIPNTAVQGQLSILPAANPLNQHALVFGGYLTPPYQDEQGQLCQVLGSTYRPWDDLSDCSWSECQPEAHQLVWQQLNETLPQLGQQWLGPARQGRAALRAAMKDHFPLFGPLINPSAYRTNYATLYQGKRVSLAKPAVYIDGLYLIGGLGSRGLLTAPLFGACMAALLSGGPLPLEADLWCAVHPARLLVRSLKKPPL.

Residues 1 to 12 show a composition bias toward polar residues; it reads MSKQQAPNTTGI. Residues 1–20 form a disordered region; sequence MSKQQAPNTTGIGTADLQWH. Residues 1 to 240 form a tRNA (mnm(5)s(2)U34)-methyltransferase region; that stretch reads MSKQQAPNTT…KRECLRGVLE (240 aa). Positions 268 to 667 are FAD-dependent cmnm(5)s(2)U34 oxidoreductase; it reads IGAGIAGAAC…LVRSLKKPPL (400 aa).

It in the N-terminal section; belongs to the methyltransferase superfamily. tRNA (mnm(5)s(2)U34)-methyltransferase family. In the C-terminal section; belongs to the DAO family. FAD is required as a cofactor.

The protein resides in the cytoplasm. The catalysed reaction is 5-aminomethyl-2-thiouridine(34) in tRNA + S-adenosyl-L-methionine = 5-methylaminomethyl-2-thiouridine(34) in tRNA + S-adenosyl-L-homocysteine + H(+). Catalyzes the last two steps in the biosynthesis of 5-methylaminomethyl-2-thiouridine (mnm(5)s(2)U) at the wobble position (U34) in tRNA. Catalyzes the FAD-dependent demodification of cmnm(5)s(2)U34 to nm(5)s(2)U34, followed by the transfer of a methyl group from S-adenosyl-L-methionine to nm(5)s(2)U34, to form mnm(5)s(2)U34. The protein is tRNA 5-methylaminomethyl-2-thiouridine biosynthesis bifunctional protein MnmC of Magnetococcus marinus (strain ATCC BAA-1437 / JCM 17883 / MC-1).